The primary structure comprises 588 residues: ATP-dependent lipid A-core flippase (588 aa).

Transmembrane regions (helical) follow at residues Phe23–Gly43, Phe56–Thr76, Asp141–Met161, Val162–Val182, Leu257–Ile277, and Thr278–Met298. An ABC transmembrane type-1 domain is found at Leu28–Arg310. Residues Ile342 to Val576 form the ABC transporter domain. Gly375–Thr382 provides a ligand contact to ATP.

The protein belongs to the ABC transporter superfamily. Lipid exporter (TC 3.A.1.106) family. As to quaternary structure, homodimer.

Its subcellular location is the cell inner membrane. It catalyses the reaction ATP + H2O + lipid A-core oligosaccharideSide 1 = ADP + phosphate + lipid A-core oligosaccharideSide 2.. Involved in lipopolysaccharide (LPS) biosynthesis. Translocates lipid A-core from the inner to the outer leaflet of the inner membrane. Transmembrane domains (TMD) form a pore in the inner membrane and the ATP-binding domain (NBD) is responsible for energy generation. This Legionella pneumophila (strain Paris) protein is ATP-dependent lipid A-core flippase.